Here is a 747-residue protein sequence, read N- to C-terminus: Fibroblast growth factor receptor (747 aa).

A signal peptide spans 1 to 24; the sequence is MIQLQNTFIFIALTIFTSASTTSL. Residues 25–288 lie on the Extracellular side of the membrane; it reads KNETKPLNTI…TEEIPQDTHY (264 aa). N-linked (GlcNAc...) asparagine glycans are attached at residues N26, N42, and N63. Residues 47 to 68 are disordered; it reads EEDLFDTNGAPKSDTVNASTTT. Ig-like C2-type domains are found at residues 74-167 and 175-267; these read PRWV…YELD and PPVL…AWLT. C99 and C151 are oxidised to a cystine. N-linked (GlcNAc...) asparagine glycosylation is found at N161, N185, N217, N227, and N240. C198 and C251 are disulfide-bonded. Residues 289-309 traverse the membrane as a helical segment; that stretch reads LIYIFGVVCFIILLAFIVYMC. Residues 310–747 are Cytoplasmic-facing; sequence NSRYQNKDPP…NGHARMQSDV (438 aa). Positions 377 to 660 constitute a Protein kinase domain; that stretch reads ILLHERIDEG…QLVEDLDRML (284 aa). ATP is bound by residues 383-391 and K412; that span reads IDEGFFGQV. D525 acts as the Proton acceptor in catalysis. The residue at position 556 (Y556) is a Phosphotyrosine; by autocatalysis. Positions 679-731 are disordered; that stretch reads YLPSDVDSNEDTESRDSANATGEDSDSVFEPIDGHGAHAYEVDEAGPLLNPQP. A compositionally biased stretch (basic and acidic residues) spans 710 to 719; sequence IDGHGAHAYE.

Belongs to the protein kinase superfamily. Tyr protein kinase family. Fibroblast growth factor receptor subfamily.

The protein resides in the membrane. It carries out the reaction L-tyrosyl-[protein] + ATP = O-phospho-L-tyrosyl-[protein] + ADP + H(+). In terms of biological role, receptor for basic fibroblast growth factor. In Ciona intestinalis (Transparent sea squirt), this protein is Fibroblast growth factor receptor (FGFR).